A 421-amino-acid chain; its full sequence is UDP-N-acetylglucosamine 1-carboxyvinyltransferase 2 (421 aa).

Lys-22–Asn-23 contacts phosphoenolpyruvate. Residue Arg-95 coordinates UDP-N-acetyl-alpha-D-glucosamine. Cys-119 serves as the catalytic Proton donor. Cys-119 is subject to 2-(S-cysteinyl)pyruvic acid O-phosphothioketal. Residues Arg-124–Gln-128, Asp-308, and Val-330 contribute to the UDP-N-acetyl-alpha-D-glucosamine site.

Belongs to the EPSP synthase family. MurA subfamily.

It is found in the cytoplasm. It carries out the reaction phosphoenolpyruvate + UDP-N-acetyl-alpha-D-glucosamine = UDP-N-acetyl-3-O-(1-carboxyvinyl)-alpha-D-glucosamine + phosphate. Its pathway is cell wall biogenesis; peptidoglycan biosynthesis. Functionally, cell wall formation. Adds enolpyruvyl to UDP-N-acetylglucosamine. The polypeptide is UDP-N-acetylglucosamine 1-carboxyvinyltransferase 2 (Staphylococcus haemolyticus (strain JCSC1435)).